Reading from the N-terminus, the 85-residue chain is Protein MANBAL (85 aa).

Residues 24-44 (YGLFLGAIFQLICVLAIIVPI) form a helical membrane-spanning segment. Basic and acidic residues predominate over residues 49 to 64 (EAEAEQAEPRSAEGPK). A disordered region spans residues 49 to 85 (EAEAEQAEPRSAEGPKKPKAAIASTNKRPKKETKKKR). Basic residues predominate over residues 75–85 (KRPKKETKKKR).

This sequence belongs to the UPF0239 family.

Its subcellular location is the membrane. This is Protein MANBAL (Manbal) from Mus musculus (Mouse).